We begin with the raw amino-acid sequence, 395 residues long: Elongation factor Tu (395 aa).

One can recognise a tr-type G domain in the interval 10–204; the sequence is KPHVNIGTIG…AVDNYIPHPV (195 aa). The interval 19 to 26 is G1; sequence GHVDHGKT. 19–26 contributes to the GTP binding site; sequence GHVDHGKT. T26 contacts Mg(2+). The tract at residues 60–64 is G2; sequence GITIS. Residues 81–84 form a G3 region; that stretch reads DCPG. GTP contacts are provided by residues 81 to 85 and 136 to 139; these read DCPGH and NKVD. The tract at residues 136–139 is G4; sequence NKVD. Positions 174–176 are G5; it reads SAL.

This sequence belongs to the TRAFAC class translation factor GTPase superfamily. Classic translation factor GTPase family. EF-Tu/EF-1A subfamily. In terms of assembly, monomer.

The protein resides in the cytoplasm. It carries out the reaction GTP + H2O = GDP + phosphate + H(+). GTP hydrolase that promotes the GTP-dependent binding of aminoacyl-tRNA to the A-site of ribosomes during protein biosynthesis. This is Elongation factor Tu from Rickettsia akari (strain Hartford).